Reading from the N-terminus, the 198-residue chain is Dephospho-CoA kinase (198 aa).

A DPCK domain is found at 4 to 198 (IIGITGGIAS…DSQLRRLQNE (195 aa)). Residue 12 to 17 (ASGKST) coordinates ATP.

The protein belongs to the CoaE family.

The protein resides in the cytoplasm. The enzyme catalyses 3'-dephospho-CoA + ATP = ADP + CoA + H(+). Its pathway is cofactor biosynthesis; coenzyme A biosynthesis; CoA from (R)-pantothenate: step 5/5. Catalyzes the phosphorylation of the 3'-hydroxyl group of dephosphocoenzyme A to form coenzyme A. This chain is Dephospho-CoA kinase, found in Streptococcus mutans serotype c (strain ATCC 700610 / UA159).